Here is a 418-residue protein sequence, read N- to C-terminus: MHIFDELKERGLIFQTTDEEALRKALEEGQVSYYTGYDPTADSLHLGHLVAILTSRRLQLAGHKPYALVGGATGLIGDPSFKDAERSLQTKDTVDGWVKSIQGQLSRFLDFENGENKAVMVNNYDWFGSISFIDFLRDIGKYFTVNYMMSKESVKKRIETGISYTEFAYQIMQGYDFFVLNQDHNVTLQIGGSDQWGNMTAGTELLRRKADKTGHVITVPLITDATGKKFGKSEGNAVWLNPEKTSPYEMYQFWMNVMDADAVRFLKIFTFLSLDEIEDIRKQFEAAPHERLAQKVLAREVVTLVHGEEAYKEALNITEQLFAGNIKNLSVKELKQGLRGVPNYQVQADENNNIVELLVSSGIVNSKRQAREDVQNGAIYVNGDRIQDLDYVLSDADKLENELTVIRRGKKKYFVLTY.

Tyr-34 serves as a coordination point for L-tyrosine. The 'HIGH' region signature appears at 39-48 (PTADSLHLGH). Residues Tyr-169 and Gln-173 each coordinate L-tyrosine. A 'KMSKS' region motif is present at residues 229–233 (KFGKS). Position 232 (Lys-232) interacts with ATP. The S4 RNA-binding domain occupies 352–418 (NNIVELLVSS…GKKKYFVLTY (67 aa)).

The protein belongs to the class-I aminoacyl-tRNA synthetase family. TyrS type 1 subfamily. As to quaternary structure, homodimer.

The protein resides in the cytoplasm. It catalyses the reaction tRNA(Tyr) + L-tyrosine + ATP = L-tyrosyl-tRNA(Tyr) + AMP + diphosphate + H(+). Functionally, catalyzes the attachment of tyrosine to tRNA(Tyr) in a two-step reaction: tyrosine is first activated by ATP to form Tyr-AMP and then transferred to the acceptor end of tRNA(Tyr). The polypeptide is Tyrosine--tRNA ligase (Streptococcus pneumoniae serotype 19F (strain G54)).